Reading from the N-terminus, the 151-residue chain is Small ribosomal subunit protein uS9 (151 aa).

Low complexity predominate over residues 1-19 (MTETTPAPQTPAAPAGPAQ). 2 disordered regions span residues 1-20 (MTETTPAPQTPAAPAGPAQS) and 121-151 (KAGFLTRDPRATERKKYGLKKARKAPQYSKR). Over residues 127–136 (RDPRATERKK) the composition is skewed to basic and acidic residues. The span at 137 to 151 (YGLKKARKAPQYSKR) shows a compositional bias: basic residues.

Belongs to the universal ribosomal protein uS9 family.

In Mycobacterium bovis (strain ATCC BAA-935 / AF2122/97), this protein is Small ribosomal subunit protein uS9 (rpsI).